The primary structure comprises 161 residues: Large ribosomal subunit protein uL30m (161 aa).

Residues 1-34 (MAGILRLVVQRPPGGLQTVTKGVESLIGTDWIRH) constitute a mitochondrion transit peptide.

It belongs to the universal ribosomal protein uL30 family. Component of the mitochondrial ribosome large subunit (39S) which comprises a 16S rRNA and about 50 distinct proteins.

It is found in the mitochondrion. The protein is Large ribosomal subunit protein uL30m (MRPL30) of Macaca fascicularis (Crab-eating macaque).